Reading from the N-terminus, the 231-residue chain is 5'-methylthioadenosine/S-adenosylhomocysteine nucleosidase (231 aa).

E12 (proton acceptor) is an active-site residue. Substrate-binding positions include G78, V153, and 174–175; that span reads ME. D198 functions as the Proton donor in the catalytic mechanism.

It belongs to the PNP/UDP phosphorylase family. MtnN subfamily.

The catalysed reaction is S-adenosyl-L-homocysteine + H2O = S-(5-deoxy-D-ribos-5-yl)-L-homocysteine + adenine. It carries out the reaction S-methyl-5'-thioadenosine + H2O = 5-(methylsulfanyl)-D-ribose + adenine. It catalyses the reaction 5'-deoxyadenosine + H2O = 5-deoxy-D-ribose + adenine. Its pathway is amino-acid biosynthesis; L-methionine biosynthesis via salvage pathway; S-methyl-5-thio-alpha-D-ribose 1-phosphate from S-methyl-5'-thioadenosine (hydrolase route): step 1/2. Catalyzes the irreversible cleavage of the glycosidic bond in both 5'-methylthioadenosine (MTA) and S-adenosylhomocysteine (SAH/AdoHcy) to adenine and the corresponding thioribose, 5'-methylthioribose and S-ribosylhomocysteine, respectively. Also cleaves 5'-deoxyadenosine, a toxic by-product of radical S-adenosylmethionine (SAM) enzymes, into 5-deoxyribose and adenine. In Vibrio cholerae serotype O1 (strain ATCC 39315 / El Tor Inaba N16961), this protein is 5'-methylthioadenosine/S-adenosylhomocysteine nucleosidase.